The primary structure comprises 552 residues: Probable malate:quinone oxidoreductase (552 aa).

Positions 530-552 (DAKPATPEAKPAQASSPQHDMAL) are disordered. The segment covering 542 to 552 (QASSPQHDMAL) has biased composition (polar residues).

The protein belongs to the MQO family. The cofactor is FAD.

The enzyme catalyses (S)-malate + a quinone = a quinol + oxaloacetate. Its pathway is carbohydrate metabolism; tricarboxylic acid cycle; oxaloacetate from (S)-malate (quinone route): step 1/1. This is Probable malate:quinone oxidoreductase from Cronobacter sakazakii (strain ATCC BAA-894) (Enterobacter sakazakii).